A 448-amino-acid polypeptide reads, in one-letter code: Delta(14)-sterol reductase ERG24 (448 aa).

A run of 7 helical transmembrane segments spans residues 18-38, 75-95, 108-128, 157-177, 251-271, 279-299, and 318-338; these read ISGA…FYLL, CWSA…LLPG, VLNY…LLLA, IIIC…ISFI, VTDS…DGVL, MIDI…LAWV, and NLGW…FYIF. NADP(+) contacts are provided by residues K345, R349, L368, W373, and 380-381; that span reads NY. A helical membrane pass occupies residues 394 to 414; it reads PTGFQTPLTYFYVIYFASLLI. Residues D420, 424–428, and Y435 contribute to the NADP(+) site; that span reads CRAKY.

This sequence belongs to the ERG4/ERG24 family.

It is found in the endoplasmic reticulum membrane. It catalyses the reaction 4,4-dimethyl-5alpha-cholesta-8,24-dien-3beta-ol + NADP(+) = 4,4-dimethyl-5alpha-cholesta-8,14,24-trien-3beta-ol + NADPH + H(+). It participates in steroid biosynthesis; zymosterol biosynthesis; zymosterol from lanosterol: step 2/6. Functionally, C-14 sterol reductase; part of the third module of ergosterol biosynthesis pathway that includes the late steps of the pathway. ERG24 reduces the C14=C15 double bond of 4,4-dimethyl-cholesta-8,14,24-trienol to produce 4,4-dimethyl-cholesta-8,24-dienol. The third module or late pathway involves the ergosterol synthesis itself through consecutive reactions that mainly occur in the endoplasmic reticulum (ER) membrane. Firstly, the squalene synthase ERG9 catalyzes the condensation of 2 farnesyl pyrophosphate moieties to form squalene, which is the precursor of all steroids. Squalene synthase is crucial for balancing the incorporation of farnesyl diphosphate (FPP) into sterol and nonsterol isoprene synthesis. Secondly, the squalene epoxidase ERG1 catalyzes the stereospecific oxidation of squalene to (S)-2,3-epoxysqualene, which is considered to be a rate-limiting enzyme in steroid biosynthesis. Then, the lanosterol synthase ERG7 catalyzes the cyclization of (S)-2,3 oxidosqualene to lanosterol, a reaction that forms the sterol core. In the next steps, lanosterol is transformed to zymosterol through a complex process involving various demethylation, reduction and desaturation reactions. The lanosterol 14-alpha-demethylase ERG11 (also known as CYP51) catalyzes C14-demethylation of lanosterol to produce 4,4'-dimethyl cholesta-8,14,24-triene-3-beta-ol, which is critical for ergosterol biosynthesis. The C-14 reductase ERG24 reduces the C14=C15 double bond of 4,4-dimethyl-cholesta-8,14,24-trienol to produce 4,4-dimethyl-cholesta-8,24-dienol. 4,4-dimethyl-cholesta-8,24-dienol is substrate of the C-4 demethylation complex ERG25-ERG26-ERG27 in which ERG25 catalyzes the three-step monooxygenation required for the demethylation of 4,4-dimethyl and 4alpha-methylsterols, ERG26 catalyzes the oxidative decarboxylation that results in a reduction of the 3-beta-hydroxy group at the C-3 carbon to an oxo group, and ERG27 is responsible for the reduction of the keto group on the C-3. ERG28 has a role as a scaffold to help anchor ERG25, ERG26 and ERG27 to the endoplasmic reticulum and ERG29 regulates the activity of the iron-containing C4-methylsterol oxidase ERG25. Then, the sterol 24-C-methyltransferase ERG6 catalyzes the methyl transfer from S-adenosyl-methionine to the C-24 of zymosterol to form fecosterol. The C-8 sterol isomerase ERG2 catalyzes the reaction which results in unsaturation at C-7 in the B ring of sterols and thus converts fecosterol to episterol. The sterol-C5-desaturase ERG3 then catalyzes the introduction of a C-5 double bond in the B ring to produce 5-dehydroepisterol. The C-22 sterol desaturase ERG5 further converts 5-dehydroepisterol into ergosta-5,7,22,24(28)-tetraen-3beta-ol by forming the C-22(23) double bond in the sterol side chain. Finally, ergosta-5,7,22,24(28)-tetraen-3beta-ol is substrate of the C-24(28) sterol reductase ERG4 to produce ergosterol. The sequence is that of Delta(14)-sterol reductase ERG24 from Candida albicans (strain SC5314 / ATCC MYA-2876) (Yeast).